The chain runs to 249 residues: Exosome complex component Rrp4 (249 aa).

An S1 motif domain is found at 73 to 144 (NDIVIGLVED…RSIDPVLSVK (72 aa)). One can recognise a KH domain in the interval 154–211 (GIVIDIMPVKVPRVIGKNKSMYETLTSKSGCSIFVANNGRIWATCPSRFSEEILIEAI).

Belongs to the RRP4 family. Component of the archaeal exosome complex. Forms a trimer of Rrp4 and/or Csl4 subunits. The trimer associates with a hexameric ring-like arrangement composed of 3 Rrp41-Rrp42 heterodimers.

The protein resides in the cytoplasm. In terms of biological role, non-catalytic component of the exosome, which is a complex involved in RNA degradation. Increases the RNA binding and the efficiency of RNA degradation. Confers strong poly(A) specificity to the exosome. This chain is Exosome complex component Rrp4, found in Saccharolobus solfataricus (strain ATCC 35092 / DSM 1617 / JCM 11322 / P2) (Sulfolobus solfataricus).